Consider the following 176-residue polypeptide: Methylated-DNA--protein-cysteine methyltransferase (176 aa).

The Nucleophile; methyl group acceptor role is filled by Cys142.

The protein belongs to the MGMT family.

It localises to the cytoplasm. The enzyme catalyses a 6-O-methyl-2'-deoxyguanosine in DNA + L-cysteinyl-[protein] = S-methyl-L-cysteinyl-[protein] + a 2'-deoxyguanosine in DNA. It catalyses the reaction a 4-O-methyl-thymidine in DNA + L-cysteinyl-[protein] = a thymidine in DNA + S-methyl-L-cysteinyl-[protein]. In terms of biological role, involved in the cellular defense against the biological effects of O6-methylguanine (O6-MeG) and O4-methylthymine (O4-MeT) in DNA. Repairs the methylated nucleobase in DNA by stoichiometrically transferring the methyl group to a cysteine residue in the enzyme. This is a suicide reaction: the enzyme is irreversibly inactivated. This is Methylated-DNA--protein-cysteine methyltransferase from Methanothermobacter thermautotrophicus (strain ATCC 29096 / DSM 1053 / JCM 10044 / NBRC 100330 / Delta H) (Methanobacterium thermoautotrophicum).